Here is a 622-residue protein sequence, read N- to C-terminus: Putative DEAD-box ATP-dependent RNA helicase 44 (622 aa).

Residues 50–97 (DRRSIVQISRSNSDNDDGNRPRDVKRERHRSHDHDRNRESDREFRERE) form a disordered region. Residues 66-97 (DGNRPRDVKRERHRSHDHDRNRESDREFRERE) are compositionally biased toward basic and acidic residues. Residues 241 to 436 (IPLGLEQRDV…RKFLRNPVVV (196 aa)) form the Helicase ATP-binding domain. Residue 254–261 (SATGSGKT) coordinates ATP. The short motif at 367-370 (DEAD) is the DEAD box element. Residues 460 to 606 (RLKKLIDDLG…LVPPELARHE (147 aa)) enclose the Helicase C-terminal domain.

Belongs to the DEAD box helicase family. DDX23/PRP28 subfamily.

It catalyses the reaction ATP + H2O = ADP + phosphate + H(+). The chain is Putative DEAD-box ATP-dependent RNA helicase 44 (RH44) from Arabidopsis thaliana (Mouse-ear cress).